A 546-amino-acid chain; its full sequence is Chaperonin GroEL (546 aa).

Residues 30–33 (TLGP), lysine 51, 87–91 (DGTTT), glycine 415, 479–481 (NAA), and aspartate 495 contribute to the ATP site. The segment at 527 to 546 (EEKPDVSASSGGMGGMGGMM) is disordered. Over residues 537–546 (GGMGGMGGMM) the composition is skewed to gly residues.

Belongs to the chaperonin (HSP60) family. As to quaternary structure, forms a cylinder of 14 subunits composed of two heptameric rings stacked back-to-back. Interacts with the co-chaperonin GroES.

The protein resides in the cytoplasm. The enzyme catalyses ATP + H2O + a folded polypeptide = ADP + phosphate + an unfolded polypeptide.. Together with its co-chaperonin GroES, plays an essential role in assisting protein folding. The GroEL-GroES system forms a nano-cage that allows encapsulation of the non-native substrate proteins and provides a physical environment optimized to promote and accelerate protein folding. This is Chaperonin GroEL from Baumannia cicadellinicola subsp. Homalodisca coagulata.